Consider the following 99-residue polypeptide: NADH-quinone oxidoreductase subunit K (99 aa).

3 helical membrane-spanning segments follow: residues 3-23 (PDNY…GVLL), 28-48 (IVVF…FVAF), and 59-79 (VVAF…LAII).

It belongs to the complex I subunit 4L family. In terms of assembly, NDH-1 is composed of 14 different subunits. Subunits NuoA, H, J, K, L, M, N constitute the membrane sector of the complex.

Its subcellular location is the cell membrane. It catalyses the reaction a quinone + NADH + 5 H(+)(in) = a quinol + NAD(+) + 4 H(+)(out). NDH-1 shuttles electrons from NADH, via FMN and iron-sulfur (Fe-S) centers, to quinones in the respiratory chain. The immediate electron acceptor for the enzyme in this species is believed to be a menaquinone. Couples the redox reaction to proton translocation (for every two electrons transferred, four hydrogen ions are translocated across the cytoplasmic membrane), and thus conserves the redox energy in a proton gradient. The protein is NADH-quinone oxidoreductase subunit K of Mycobacterium sp. (strain JLS).